The following is a 48-amino-acid chain: Small polypeptide DEVIL 19 (48 aa).

The tract at residues 13-44 (AFTSKCVSLVKEQRARLYILRRCATMLCCWYI) is required for DVL/RTFL small polypeptide activity. The chain crosses the membrane as a helical span at residues 25 to 42 (QRARLYILRRCATMLCCW).

It belongs to the DVL/RTFL small polypeptides family.

The protein localises to the cell membrane. Small polypeptide acting as a regulatory molecule which coordinates cellular responses required for differentiation, growth and development, probably by restricting polar cell proliferation in lateral organs and coordinating socket cell recruitment and differentiation at trichome sites. The chain is Small polypeptide DEVIL 19 from Arabidopsis thaliana (Mouse-ear cress).